A 325-amino-acid chain; its full sequence is Lipid droplet-associated hydrolase (325 aa).

Serine 139 functions as the Nucleophile in the catalytic mechanism. Active-site charge relay system residues include aspartate 271 and histidine 300.

This sequence belongs to the AB hydrolase superfamily. LDAH family.

It is found in the lipid droplet. The protein localises to the endoplasmic reticulum. It carries out the reaction a cholesterol ester + H2O = cholesterol + a fatty acid + H(+). Functionally, probable serine lipid hydrolase associated with lipid droplets. Has low cholesterol esterase activity. Appears to lack triglyceride lipase activity. Involved in cholesterol and triglyceride homeostasis; stimulates cellular triglyceride accumulation and cellular cholesterol release. Acts antagonistically with PNPLA2/ATGL in regulation of cellular lipid stores. May regulate triglyceride accumulation indirectly through stimulation of PNPLA2/ATGL ubiquitination and proteasomal degradation. Promotes microtubule-dependent lipid droplet fusion. Highly expressed in macrophage-rich areas in atherosclerotic lesions, suggesting that it could promote cholesterol ester turnover in macrophages. This is Lipid droplet-associated hydrolase from Pongo abelii (Sumatran orangutan).